Reading from the N-terminus, the 277-residue chain is Bifunctional protein FolD (277 aa).

Residues 156–158 (GRS), Ser183, and Ile224 contribute to the NADP(+) site.

Belongs to the tetrahydrofolate dehydrogenase/cyclohydrolase family. Homodimer.

The catalysed reaction is (6R)-5,10-methylene-5,6,7,8-tetrahydrofolate + NADP(+) = (6R)-5,10-methenyltetrahydrofolate + NADPH. The enzyme catalyses (6R)-5,10-methenyltetrahydrofolate + H2O = (6R)-10-formyltetrahydrofolate + H(+). The protein operates within one-carbon metabolism; tetrahydrofolate interconversion. Functionally, catalyzes the oxidation of 5,10-methylenetetrahydrofolate to 5,10-methenyltetrahydrofolate and then the hydrolysis of 5,10-methenyltetrahydrofolate to 10-formyltetrahydrofolate. This Kosmotoga olearia (strain ATCC BAA-1733 / DSM 21960 / TBF 19.5.1) protein is Bifunctional protein FolD.